A 194-amino-acid chain; its full sequence is Glycerol-3-phosphate acyltransferase (194 aa).

A run of 5 helical transmembrane segments spans residues 2–22 (LIEI…TGLL), 51–71 (SVGI…VLAA), 80–100 (WIAL…FLGF), 112–132 (VFLG…VAVV), and 155–175 (FLSG…LVIW).

Belongs to the PlsY family. As to quaternary structure, probably interacts with PlsX.

Its subcellular location is the cell inner membrane. The enzyme catalyses an acyl phosphate + sn-glycerol 3-phosphate = a 1-acyl-sn-glycero-3-phosphate + phosphate. Its pathway is lipid metabolism; phospholipid metabolism. Its function is as follows. Catalyzes the transfer of an acyl group from acyl-phosphate (acyl-PO(4)) to glycerol-3-phosphate (G3P) to form lysophosphatidic acid (LPA). This enzyme utilizes acyl-phosphate as fatty acyl donor, but not acyl-CoA or acyl-ACP. The chain is Glycerol-3-phosphate acyltransferase from Geobacter metallireducens (strain ATCC 53774 / DSM 7210 / GS-15).